The chain runs to 198 residues: FMN-dependent NADH:quinone oxidoreductase (198 aa).

Residues Ser10 and 16–18 (SIS) contribute to the FMN site.

It belongs to the azoreductase type 1 family. As to quaternary structure, homodimer. It depends on FMN as a cofactor.

The enzyme catalyses 2 a quinone + NADH + H(+) = 2 a 1,4-benzosemiquinone + NAD(+). It catalyses the reaction N,N-dimethyl-1,4-phenylenediamine + anthranilate + 2 NAD(+) = 2-(4-dimethylaminophenyl)diazenylbenzoate + 2 NADH + 2 H(+). Its function is as follows. Quinone reductase that provides resistance to thiol-specific stress caused by electrophilic quinones. Functionally, also exhibits azoreductase activity. Catalyzes the reductive cleavage of the azo bond in aromatic azo compounds to the corresponding amines. The polypeptide is FMN-dependent NADH:quinone oxidoreductase (Mycoplasmopsis pulmonis (strain UAB CTIP) (Mycoplasma pulmonis)).